The primary structure comprises 203 residues: Regulator of free ubiquitin chains 1 (203 aa).

It belongs to the RFU1 family.

The protein resides in the endosome. Functionally, inhibitor of the DOA4 deubiquitinase involved in the regulation of protein degradation by the proteasome and maintenance of a normal level of free ubiquitin. The polypeptide is Regulator of free ubiquitin chains 1 (RFU1) (Candida glabrata (strain ATCC 2001 / BCRC 20586 / JCM 3761 / NBRC 0622 / NRRL Y-65 / CBS 138) (Yeast)).